The sequence spans 224 residues: Peroxiredoxin-6 (224 aa).

The Thioredoxin domain occupies 5–169 (LLLGDEAPNF…ILRVIISLQL (165 aa)). The segment at 31 to 40 (DSWGILFSHP) is required and sufficient for targeting to lysosomes and lamellar bodies. Thr44 carries the post-translational modification Phosphothreonine. The Cysteine sulfenic acid (-SOH) intermediate; for peroxidase activity role is filled by Cys47. At Lys63 the chain carries N6-acetyllysine. Tyr89 bears the Phosphotyrosine mark. Catalysis depends on Asp140, which acts as the For phospholipase activity. Thr177 bears the Phosphothreonine; by MAPK mark. Lys209 carries the N6-acetyllysine; alternate modification. Lys209 carries the N6-succinyllysine; alternate modification.

The protein belongs to the peroxiredoxin family. Prx6 subfamily. As to quaternary structure, homodimer. Interacts with GSTP1; mediates PRDX6 glutathionylation and regeneration. Interacts with APEX1. Interacts with STH. May interact with FAM168B. May interact with HTR2A. Irreversibly inactivated by overoxidation of Cys-47 to sulfinic acid (Cys-SO(2)H) and sulfonic acid (Cys-SO(3)H) forms upon oxidative stress. In terms of processing, phosphorylation at Thr-177 by MAP kinases increases the phospholipase activity of the enzyme. The phosphorylated form exhibits a greater lysophosphatidylcholine acyltransferase activity compared to the non-phosphorylated form.

The protein localises to the cytoplasm. Its subcellular location is the lysosome. It catalyses the reaction a hydroperoxide + 2 glutathione = an alcohol + glutathione disulfide + H2O. It carries out the reaction a 1,2-diacyl-sn-glycero-3-phosphocholine + H2O = a 1-acyl-sn-glycero-3-phosphocholine + a fatty acid + H(+). The catalysed reaction is a 1-acyl-sn-glycero-3-phosphocholine + an acyl-CoA = a 1,2-diacyl-sn-glycero-3-phosphocholine + CoA. The enzyme catalyses 1-hexadecanoyl-sn-glycero-3-phosphocholine + hexadecanoyl-CoA = 1,2-dihexadecanoyl-sn-glycero-3-phosphocholine + CoA. It catalyses the reaction 1,2-dihexadecanoyl-sn-glycero-3-phosphocholine + H2O = 1-hexadecanoyl-sn-glycero-3-phosphocholine + hexadecanoate + H(+). Thiol-specific peroxidase that catalyzes the reduction of hydrogen peroxide and organic hydroperoxides to water and alcohols, respectively. Can reduce H(2)O(2) and short chain organic, fatty acid, and phospholipid hydroperoxides. Also has phospholipase activity, and can therefore either reduce the oxidized sn-2 fatty acyl group of phospholipids (peroxidase activity) or hydrolyze the sn-2 ester bond of phospholipids (phospholipase activity). These activities are dependent on binding to phospholipids at acidic pH and to oxidized phospholipds at cytosolic pH. Plays a role in cell protection against oxidative stress by detoxifying peroxides and in phospholipid homeostasis. Exhibits acyl-CoA-dependent lysophospholipid acyltransferase which mediates the conversion of lysophosphatidylcholine (1-acyl-sn-glycero-3-phosphocholine or LPC) into phosphatidylcholine (1,2-diacyl-sn-glycero-3-phosphocholine or PC). Shows a clear preference for LPC as the lysophospholipid and for palmitoyl CoA as the fatty acyl substrate. In Sus scrofa (Pig), this protein is Peroxiredoxin-6 (PRDX6).